Reading from the N-terminus, the 190-residue chain is Isopentenyl-diphosphate Delta-isomerase (190 aa).

Mn(2+) is bound by residues His-27 and His-34. The 135-residue stretch at 32–166 folds into the Nudix hydrolase domain; it reads ALHLAFSCHV…PWAFSPWLTL (135 aa). Cys-69 is an active-site residue. His-71 lines the Mn(2+) pocket. Position 89 (Glu-89) interacts with Mg(2+). Mn(2+) contacts are provided by Glu-116 and Glu-118. Glu-118 is a catalytic residue.

Belongs to the IPP isomerase type 1 family. The cofactor is Mg(2+). Mn(2+) serves as cofactor.

The protein resides in the cytoplasm. It carries out the reaction isopentenyl diphosphate = dimethylallyl diphosphate. It functions in the pathway isoprenoid biosynthesis; dimethylallyl diphosphate biosynthesis; dimethylallyl diphosphate from isopentenyl diphosphate: step 1/1. Functionally, catalyzes the 1,3-allylic rearrangement of the homoallylic substrate isopentenyl (IPP) to its highly electrophilic allylic isomer, dimethylallyl diphosphate (DMAPP). In Clavibacter sepedonicus (Clavibacter michiganensis subsp. sepedonicus), this protein is Isopentenyl-diphosphate Delta-isomerase.